A 416-amino-acid chain; its full sequence is Imidazolonepropionase (416 aa).

Residues His-81 and His-83 each contribute to the Fe(3+) site. 2 residues coordinate Zn(2+): His-81 and His-83. Positions 90, 153, and 186 each coordinate 4-imidazolone-5-propanoate. Tyr-153 is a binding site for N-formimidoyl-L-glutamate. Fe(3+) is bound at residue His-251. Position 251 (His-251) interacts with Zn(2+). Gln-254 is a 4-imidazolone-5-propanoate binding site. Fe(3+) is bound at residue Asp-326. Zn(2+) is bound at residue Asp-326. Residues Asn-328 and Gly-330 each contribute to the N-formimidoyl-L-glutamate site. Thr-331 is a binding site for 4-imidazolone-5-propanoate.

The protein belongs to the metallo-dependent hydrolases superfamily. HutI family. Requires Zn(2+) as cofactor. Fe(3+) is required as a cofactor.

The protein localises to the cytoplasm. It carries out the reaction 4-imidazolone-5-propanoate + H2O = N-formimidoyl-L-glutamate. The protein operates within amino-acid degradation; L-histidine degradation into L-glutamate; N-formimidoyl-L-glutamate from L-histidine: step 3/3. Catalyzes the hydrolytic cleavage of the carbon-nitrogen bond in imidazolone-5-propanoate to yield N-formimidoyl-L-glutamate. It is the third step in the universal histidine degradation pathway. The chain is Imidazolonepropionase from Paracidovorax citrulli (strain AAC00-1) (Acidovorax citrulli).